A 316-amino-acid chain; its full sequence is Lipoyl synthase (316 aa).

Positions 60, 65, 71, 86, 90, 93, and 297 each coordinate [4Fe-4S] cluster. Residues 72–286 enclose the Radical SAM core domain; sequence WEDREATFLI…KDEADEVGFT (215 aa).

Belongs to the radical SAM superfamily. Lipoyl synthase family. [4Fe-4S] cluster is required as a cofactor.

The protein localises to the cytoplasm. The enzyme catalyses [[Fe-S] cluster scaffold protein carrying a second [4Fe-4S](2+) cluster] + N(6)-octanoyl-L-lysyl-[protein] + 2 oxidized [2Fe-2S]-[ferredoxin] + 2 S-adenosyl-L-methionine + 4 H(+) = [[Fe-S] cluster scaffold protein] + N(6)-[(R)-dihydrolipoyl]-L-lysyl-[protein] + 4 Fe(3+) + 2 hydrogen sulfide + 2 5'-deoxyadenosine + 2 L-methionine + 2 reduced [2Fe-2S]-[ferredoxin]. The protein operates within protein modification; protein lipoylation via endogenous pathway; protein N(6)-(lipoyl)lysine from octanoyl-[acyl-carrier-protein]: step 2/2. Its function is as follows. Catalyzes the radical-mediated insertion of two sulfur atoms into the C-6 and C-8 positions of the octanoyl moiety bound to the lipoyl domains of lipoate-dependent enzymes, thereby converting the octanoylated domains into lipoylated derivatives. The protein is Lipoyl synthase of Nocardioides sp. (strain ATCC BAA-499 / JS614).